A 288-amino-acid chain; its full sequence is 11-beta-hydroxysteroid dehydrogenase 1 (288 aa).

The Cytoplasmic portion of the chain corresponds to 1–4 (MKKY). Residues 5-20 (LLPVLVLCLGYYYSTN) form a helical; Signal-anchor for type II membrane protein membrane-spanning segment. At 21–288 (EEFRPEMLQG…SYNRDLFVSN (268 aa)) the chain is on the lumenal side. NADP(+) is bound by residues 37 to 63 (GASKGIGREMAYHLSKMGAHVVLTARS), 88 to 89 (TM), and 115 to 117 (NHI). The N-linked (GlcNAc...) asparagine glycan is linked to Asn-158. Ser-166 is a substrate binding site. Tyr-179 acts as the Proton acceptor in catalysis. 179-183 (YSASK) is an NADP(+) binding site. N-linked (GlcNAc...) asparagine glycosylation occurs at Asn-203. Residues 212–218 (GFIDTET) and 214–218 (IDTET) contribute to the NADP(+) site.

It belongs to the short-chain dehydrogenases/reductases (SDR) family. As to quaternary structure, homodimer. In terms of processing, glycosylated. Liver, kidney, lung and testis. Brain. Expressed in liver (at protein level).

Its subcellular location is the endoplasmic reticulum membrane. The catalysed reaction is an 11beta-hydroxysteroid + NADP(+) = an 11-oxosteroid + NADPH + H(+). It catalyses the reaction corticosterone + NADP(+) = 11-dehydrocorticosterone + NADPH + H(+). The enzyme catalyses a 7beta-hydroxysteroid + NADP(+) = a 7-oxosteroid + NADPH + H(+). It carries out the reaction 7-oxocholesterol + NADPH + H(+) = 7beta-hydroxycholesterol + NADP(+). The catalysed reaction is chenodeoxycholate + NADP(+) = 7-oxolithocholate + NADPH + H(+). It catalyses the reaction 7-oxolithocholate + NADPH + H(+) = ursodeoxycholate + NADP(+). The enzyme catalyses glycochenodeoxycholate + NADP(+) = 7-oxoglycolithocholate + NADPH + H(+). It carries out the reaction taurochenodeoxycholate + NADP(+) = 7-oxotaurolithocholate + NADPH + H(+). The catalysed reaction is tauroursodeoxycholate + NADP(+) = 7-oxotaurolithocholate + NADPH + H(+). It catalyses the reaction glycoursodeoxycholate + NADP(+) = 7-oxoglycolithocholate + NADPH + H(+). The enzyme catalyses 7-oxopregnenolone + NADPH + H(+) = 7beta-hydroxypregnenolone + NADP(+). It carries out the reaction 3beta,7alpha-dihydroxyandrost-5-en-17-one + NADP(+) = 3beta-hydroxy-5-androstene-7,17-dione + NADPH + H(+). The catalysed reaction is 3beta-hydroxy-5-androstene-7,17-dione + NADPH + H(+) = 3beta,7beta-dihydroxyandrost-5-en-17-one + NADP(+). It catalyses the reaction 3beta-hydroxy-5alpha-androstane-7,17-dione + NADPH + H(+) = 3beta,7beta-dihydroxy-5alpha-androstan-17-one + NADP(+). Controls the reversible conversion of biologically active glucocorticoids such as 11-dehydrocorticosterone to corticosterone using NADP(H). Participates in the corticosteroid receptor-mediated anti-inflammatory response, as well as metabolic and homeostatic processes. Bidirectional in vitro, predominantly functions as a reductase in vivo, thereby increasing the concentration of active glucocorticoids. It has broad substrate specificity, besides glucocorticoids, it accepts other steroid and sterol substrates. Interconverts 7-oxo- and 7-hydroxy-neurosteroids such as 7-oxopregnenolone and 7beta-hydroxypregnenolone, 7-oxodehydroepiandrosterone (3beta-hydroxy-5-androstene-7,17-dione) and 7beta-hydroxydehydroepiandrosterone (3beta,7beta-dihydroxyandrost-5-en-17-one), among others. Catalyzes the stereo-specific conversion of the major dietary oxysterol, 7-ketocholesterol (7-oxocholesterol), into the more polar 7-beta-hydroxycholesterol metabolite. 7-oxocholesterol is one of the most important oxysterols, it participates in several events such as induction of apoptosis, accumulation in atherosclerotic lesions, lipid peroxidation, and induction of foam cell formation. Mediates the 7-oxo reduction of 7-oxolithocholate mainly to chenodeoxycholate, and to a lesser extent to ursodeoxycholate, both in its free form and when conjugated to glycine or taurine, providing a link between glucocorticoid activation and bile acid metabolism. Catalyzes the synthesis of 7-beta-25-dihydroxycholesterol from 7-oxo-25-hydroxycholesterol in vitro, which acts as a ligand for the G-protein-coupled receptor (GPCR) Epstein-Barr virus-induced gene 2 (EBI2) and may thereby regulate immune cell migration. The chain is 11-beta-hydroxysteroid dehydrogenase 1 from Rattus norvegicus (Rat).